Reading from the N-terminus, the 38-residue chain is Photosystem II reaction center protein L (38 aa).

Residues Ser17 to Phe37 traverse the membrane as a helical segment.

Belongs to the PsbL family. As to quaternary structure, PSII is composed of 1 copy each of membrane proteins PsbA, PsbB, PsbC, PsbD, PsbE, PsbF, PsbH, PsbI, PsbJ, PsbK, PsbL, PsbM, PsbT, PsbX, PsbY, PsbZ, Psb30/Ycf12, at least 3 peripheral proteins of the oxygen-evolving complex and a large number of cofactors. It forms dimeric complexes.

It is found in the plastid. The protein localises to the chloroplast thylakoid membrane. In terms of biological role, one of the components of the core complex of photosystem II (PSII). PSII is a light-driven water:plastoquinone oxidoreductase that uses light energy to abstract electrons from H(2)O, generating O(2) and a proton gradient subsequently used for ATP formation. It consists of a core antenna complex that captures photons, and an electron transfer chain that converts photonic excitation into a charge separation. This subunit is found at the monomer-monomer interface and is required for correct PSII assembly and/or dimerization. The sequence is that of Photosystem II reaction center protein L from Ephedra sinica (Chinese ephedra).